The chain runs to 74 residues: Cytochrome c oxidase assembly factor 5 (74 aa).

The region spanning 27-65 (QSDCVVQEGKSPRQCLKEGYCNSLKYAFFECKRSVLDNR) is the CHCH domain. The short motif at 30–41 (CVVQEGKSPRQC) is the Cx10C motif element. 2 disulfides stabilise this stretch: cysteine 30–cysteine 57 and cysteine 41–cysteine 47. Phosphoserine is present on serine 37. Positions 47–57 (CNSLKYAFFEC) match the Cx9C motif motif.

This sequence belongs to the PET191 family.

Its function is as follows. Involved in an early step of the mitochondrial complex IV assembly process. This chain is Cytochrome c oxidase assembly factor 5 (COA5), found in Homo sapiens (Human).